The primary structure comprises 135 residues: Nitrogen fixation protein NifU 1 (135 aa).

A compositionally biased stretch (basic and acidic residues) spans 1 to 10 (MRDMQDDDTK). Residues 1–29 (MRDMQDDDTKSPAPPPAAAAAARRAAGQA) are disordered. The segment covering 18–29 (AAAAARRAAGQA) has biased composition (low complexity).

The protein belongs to the NifU family.

May be involved in the formation or repair of [Fe-S] clusters present in iron-sulfur proteins. This chain is Nitrogen fixation protein NifU 1 (nifU1), found in Rhodobacter capsulatus (Rhodopseudomonas capsulata).